Consider the following 717-residue polypeptide: HHIP-like protein 2 (717 aa).

The first 40 residues, 1–40 (MLGKHTSPHTVPGHRAPWLSPGIFCLGLPFLLGWVGLLQG), serve as a signal peptide directing secretion. Cystine bridges form between Cys203–Cys545, Cys207–Cys551, Cys423–Cys441, and Cys508–Cys607. Residues 642–717 (ARKASNATFT…MRQAAGRSHP (76 aa)) form a disordered region. Positions 646-662 (SNATFTSSSDRVASQKG) are enriched in polar residues. Asn647 is a glycosylation site (N-linked (GlcNAc...) asparagine). Residues 672–687 (SSKKTFRRPGTKKKSR) show a composition bias toward basic residues.

It belongs to the HHIP family.

The protein resides in the secreted. The protein is HHIP-like protein 2 (Hhipl2) of Mus musculus (Mouse).